We begin with the raw amino-acid sequence, 41 residues long: uncharacterized protein (41 aa).

Positions 1–41 (MGKKHRNRITGQKKNNHIPEKDIIAAEEAHGKEYSAAKRKP) are disordered. The span at 17-41 (HIPEKDIIAAEEAHGKEYSAAKRKP) shows a compositional bias: basic and acidic residues.

This is an uncharacterized protein from Bacillus subtilis (strain 168).